The primary structure comprises 978 residues: Macrophage colony-stimulating factor 1 receptor (978 aa).

The N-terminal stretch at 1 to 19 (MELGPPLVLLLATVWHGQG) is a signal peptide. Residues 20-515 (APVIEPSGPE…QLPDESLFTP (496 aa)) are Extracellular-facing. 5 Ig-like C2-type domains span residues 24 to 104 (EPSG…VKDP), 107 to 197 (SWNL…KVNR), 204 to 298 (QIKL…VVES), 299 to 397 (AYLN…LTLR), and 398 to 503 (YPPE…SLGQ). 3 cysteine pairs are disulfide-bonded: Cys-42-Cys-84, Cys-127-Cys-177, and Cys-224-Cys-278. N-linked (GlcNAc...) asparagine glycosylation is found at Asn-45 and Asn-73. Asn-302, Asn-335, Asn-389, Asn-410, Asn-449, Asn-478, and Asn-491 each carry an N-linked (GlcNAc...) asparagine glycan. Cys-417 and Cys-483 are oxidised to a cystine. Residues 516-536 (VVVACMSVMSLLVLLLLLLLY) form a helical membrane-spanning segment. The Cytoplasmic segment spans residues 537 to 978 (KYKQKPKYQV…LQPNNYQFAC (442 aa)). Residues 540 to 572 (QKPKYQVRWKIIERYEGNSYTFIDPTQLPYNEK) form a regulatory juxtamembrane domain region. Residues Tyr-544 and Tyr-559 each carry the phosphotyrosine; by autocatalysis modification. In terms of domain architecture, Protein kinase spans 580 to 914 (LQFGKTLGAG…CFLLQEQARL (335 aa)). ATP is bound by residues 586–594 (LGAGAFGKV) and Lys-614. Residues Tyr-697 and Tyr-706 each carry the phosphotyrosine; by autocatalysis modification. A Phosphoserine modification is found at Ser-711. Tyr-721 bears the Phosphotyrosine; by autocatalysis mark. Asp-776 functions as the Proton acceptor in the catalytic mechanism. The segment at 794 to 816 (DFGLARDIMNDSNYVVKGNARLP) is activation loop. Phosphotyrosine; by autocatalysis is present on residues Tyr-807 and Tyr-921. The tract at residues 921-957 (YANLPSSGGSSGSDSGGGSSGGSSSEPEEESSSEHLA) is disordered. Gly residues predominate over residues 929–941 (GSSGSDSGGGSSG). Tyr-974 is subject to Phosphotyrosine; by autocatalysis.

This sequence belongs to the protein kinase superfamily. Tyr protein kinase family. CSF-1/PDGF receptor subfamily. Monomer. Homodimer. Interacts with CSF1 and IL34. Interaction with dimeric CSF1 or IL34 leads to receptor homodimerization. Interacts with INPPL1/SHIP2 and THOC5. Interacts (tyrosine phosphorylated) with PLCG2 (via SH2 domain). Interacts (tyrosine phosphorylated) with PIK3R1 (via SH2 domain). Interacts (tyrosine phosphorylated) with FYN, YES1 and SRC (via SH2 domain). Interacts (tyrosine phosphorylated) with CBL, GRB2 and SLA2. Post-translationally, autophosphorylated in response to CSF1 or IL34 binding. Phosphorylation at Tyr-559 is important for normal down-regulation of signaling by ubiquitination, internalization and degradation. Phosphorylation at Tyr-559 and Tyr-807 is important for interaction with SRC family members, including FYN, YES1 and SRC, and for subsequent activation of these protein kinases. Phosphorylation at Tyr-697 and Tyr-921 is important for interaction with GRB2. Phosphorylation at Tyr-721 is important for interaction with PIK3R1. Phosphorylation at Tyr-721 and Tyr-807 is important for interaction with PLCG2. Phosphorylation at Tyr-974 is important for interaction with CBL. Dephosphorylation by PTPN2 negatively regulates downstream signaling and macrophage differentiation. In terms of processing, ubiquitinated. Becomes rapidly polyubiquitinated after autophosphorylation, leading to its degradation.

Its subcellular location is the cell membrane. The enzyme catalyses L-tyrosyl-[protein] + ATP = O-phospho-L-tyrosyl-[protein] + ADP + H(+). With respect to regulation, present in an inactive conformation in the absence of bound ligand. CSF1 or IL34 binding leads to dimerization and activation by autophosphorylation on tyrosine residues. Functionally, tyrosine-protein kinase that acts as a cell-surface receptor for CSF1 and IL34 and plays an essential role in the regulation of survival, proliferation and differentiation of hematopoietic precursor cells, especially mononuclear phagocytes, such as macrophages and monocytes. Promotes the release of pro-inflammatory chemokines in response to IL34 and CSF1, and thereby plays an important role in innate immunity and in inflammatory processes. Plays an important role in the regulation of osteoclast proliferation and differentiation, the regulation of bone resorption, and is required for normal bone and tooth development. Required for normal male and female fertility, and for normal development of milk ducts and acinar structures in the mammary gland during pregnancy. Promotes reorganization of the actin cytoskeleton, regulates formation of membrane ruffles, cell adhesion and cell migration, and promotes cancer cell invasion. Activates several signaling pathways in response to ligand binding, including the ERK1/2 and the JNK pathway. Phosphorylates PIK3R1, PLCG2, GRB2, SLA2 and CBL. Activation of PLCG2 leads to the production of the cellular signaling molecules diacylglycerol and inositol 1,4,5-trisphosphate, that then lead to the activation of protein kinase C family members, especially PRKCD. Phosphorylation of PIK3R1, the regulatory subunit of phosphatidylinositol 3-kinase, leads to activation of the AKT1 signaling pathway. Activated CSF1R also mediates activation of the MAP kinases MAPK1/ERK2 and/or MAPK3/ERK1, and of the SRC family kinases SRC, FYN and YES1. Activated CSF1R transmits signals both via proteins that directly interact with phosphorylated tyrosine residues in its intracellular domain, or via adapter proteins, such as GRB2. Promotes activation of STAT family members STAT3, STAT5A and/or STAT5B. Promotes tyrosine phosphorylation of SHC1 and INPP5D/SHIP-1. Receptor signaling is down-regulated by protein phosphatases, such as INPP5D/SHIP-1, that dephosphorylate the receptor and its downstream effectors, and by rapid internalization of the activated receptor. In the central nervous system, may play a role in the development of microglia macrophages. In Rattus norvegicus (Rat), this protein is Macrophage colony-stimulating factor 1 receptor (Csf1r).